We begin with the raw amino-acid sequence, 326 residues long: Adenosine receptor A1 (326 aa).

Over 1-10 (MPPSISAFQA) the chain is Extracellular. The chain crosses the membrane as a helical span at residues 11–33 (AYIGIEVLIALVSVPGNVLVIWA). The Cytoplasmic portion of the chain corresponds to 34-46 (VKVNQALRDATFC). Residues 47–69 (FIVSLAVADVAVGALVIPLAILI) form a helical membrane-spanning segment. At 70–80 (NIGPQTYFHTC) the chain is on the extracellular side. A disulfide bridge connects residues cysteine 80 and cysteine 169. A helical transmembrane segment spans residues 81-102 (LMVACPVLILTQSSILALLAIA). Over 103-123 (VDRYLRVKIPLRYKMVVTPRR) the chain is Cytoplasmic. Residues 124–146 (AAVAIAGCWILSFVVGLTPMFGW) traverse the membrane as a helical segment. The Extracellular segment spans residues 147–176 (NNLSAVERAWAANGSMGEPVIKCEFEKVIS). A glycan (N-linked (GlcNAc...) asparagine) is linked at asparagine 159. Residues 177–201 (MEYMVYFNFFVWVLPPLLLMVLIYL) traverse the membrane as a helical segment. At 202-235 (EVFYLIRKQLNKKVSASSGDPQKYYGKELKIAKS) the chain is on the cytoplasmic side. A helical transmembrane segment spans residues 236–259 (LALILFLFALSWLPLHILNCITLF). Residues 260-267 (CPSCHKPS) lie on the Extracellular side of the membrane. The helical transmembrane segment at 268-292 (ILTYIAIFLTHGNSAMNPIVYAFRI) threads the bilayer. Topologically, residues 293–326 (QKFRVTFLKIWNDHFRCQPAPPIDEDLPEERPDD) are cytoplasmic. Cysteine 309 carries the S-palmitoyl cysteine lipid modification.

It belongs to the G-protein coupled receptor 1 family.

The protein resides in the cell membrane. Functionally, receptor for adenosine. The activity of this receptor is mediated by G proteins which inhibit adenylyl cyclase. This Homo sapiens (Human) protein is Adenosine receptor A1 (ADORA1).